The following is a 208-amino-acid chain: Histone H1t (208 aa).

The segment covering 1 to 16 (MSETVPAASAGAVPAV) has biased composition (low complexity). The tract at residues 1 to 40 (MSETVPAASAGAVPAVMEKPLTKKRGKKPAGLTSASRKAP) is disordered. A Phosphoserine modification is found at S9. The H15 domain occupies 40 to 113 (PNLSVSKLIT…GASGSFKLSK (74 aa)). A Citrulline modification is found at R58. The tract at residues 102 to 208 (GTGASGSFKL…ANIRKATSRK (107 aa)) is disordered. The segment covering 111–136 (LSKKVLPKSTRRKANKSASAKTKKLV) has biased composition (basic residues). S143 is subject to Phosphoserine. Residues 148–157 (KTNKRAKKPR) show a composition bias toward basic residues. Position 159 is a phosphothreonine (T159). The span at 163-175 (KAVRSGRKAKGAK) shows a compositional bias: basic residues. 2 positions are modified to phosphoserine: S167 and S182. The span at 187–208 (RATKPKLTQHHKANIRKATSRK) shows a compositional bias: basic residues.

The protein belongs to the histone H1/H5 family. Post-translationally, phosphorylated in early spermatids. Citrullination at Arg-58 (H1R54ci) by PADI4 takes place within the DNA-binding site of H1 and results in its displacement from chromatin and global chromatin decondensation, thereby promoting pluripotency and stem cell maintenance.

In terms of biological role, testis-specific histone H1 that forms less compacted chromatin compared to other H1 histone subtypes. Formation of more relaxed chromatin may be required to promote chromatin architecture required for proper chromosome regulation during meiosis, such as homologous recombination. Histones H1 act as linkers that bind to nucleosomes and compact polynucleosomes into a higher-order chromatin configuration. This Macaca mulatta (Rhesus macaque) protein is Histone H1t.